The primary structure comprises 634 residues: UPF0313 protein PG_0934 (634 aa).

Residues 302–582 enclose the Radical SAM core domain; the sequence is AYEMIKHSVN…RQHMFFFWYK (281 aa). [4Fe-4S] cluster contacts are provided by Cys316, Cys320, and Cys323. The disordered stretch occupies residues 607–634; that stretch reads DRTTSSRNDRHTPPSTQPRKSKSKSRHS. Residues 625–634 are compositionally biased toward basic residues; the sequence is RKSKSKSRHS.

The protein belongs to the UPF0313 family. Requires [4Fe-4S] cluster as cofactor.

This is UPF0313 protein PG_0934 from Porphyromonas gingivalis (strain ATCC BAA-308 / W83).